The primary structure comprises 446 residues: MTEQKRKIEKLTGVKGMNDILPQDAGLWEFFEATVKSLLRAYGYQNIRTPIVEHTQLFTRGIGEVTDIVEKEMYSFTDALNGENLTMRPENTAAVVRASIEHNMLYDGPKRLWYIGPMFRHERPQRGRYRQFHQVGVEALGFAGPDADAEIIMMCQRLWDDLGLTGIKLEINSLGLAEERAAHRVELIKYLEQFADVLDEDAKRRLYTNPLRVLDTKNPALQEIAQNAPKLIDFLGDESRAHFEGLQRLLLANNIPFKINPRLVRGLDYYNLTVFEWVTDKLGAQGTVAAGGRYDPLIEQLGGKPTAACGWAMGIERILELLKEEDLAPEQEGVDVYVVHQGETAREQAFIAAERLRDTGLDVIFHCSADGAPASFKSQMKRADASGAAFAVIFGEEEVANGTVGVKALRGAGEEGEKNVQQTVPVESLTEFLINAMVASAEDGDD.

The protein belongs to the class-II aminoacyl-tRNA synthetase family. Homodimer.

It is found in the cytoplasm. It catalyses the reaction tRNA(His) + L-histidine + ATP = L-histidyl-tRNA(His) + AMP + diphosphate + H(+). The polypeptide is Histidine--tRNA ligase (Burkholderia ambifaria (strain MC40-6)).